The primary structure comprises 322 residues: Undecaprenyl-phosphate 4-deoxy-4-formamido-L-arabinose transferase (322 aa).

Topologically, residues 1–235 are cytoplasmic; sequence MFEIHPVKKV…TCLTTTPLRM (235 aa). The chain crosses the membrane as a helical span at residues 236-256; that stretch reads LSLLGSIIAIGGFSIAVLLVI. The Periplasmic segment spans residues 257-269; it reads LRLTFGPQWAAEG. A helical membrane pass occupies residues 270–290; that stretch reads VFMLFAVLFTFIGAQFIGMGL. Residues 291–322 lie on the Cytoplasmic side of the membrane; that stretch reads LGEYIGRIYTDVRARPRYFVQQVIRPSSKENE.

The protein belongs to the glycosyltransferase 2 family.

It is found in the cell inner membrane. It catalyses the reaction UDP-4-deoxy-4-formamido-beta-L-arabinose + di-trans,octa-cis-undecaprenyl phosphate = 4-deoxy-4-formamido-alpha-L-arabinopyranosyl di-trans,octa-cis-undecaprenyl phosphate + UDP. The protein operates within glycolipid biosynthesis; 4-amino-4-deoxy-alpha-L-arabinose undecaprenyl phosphate biosynthesis; 4-amino-4-deoxy-alpha-L-arabinose undecaprenyl phosphate from UDP-4-deoxy-4-formamido-beta-L-arabinose and undecaprenyl phosphate: step 1/2. It participates in bacterial outer membrane biogenesis; lipopolysaccharide biosynthesis. Functionally, catalyzes the transfer of 4-deoxy-4-formamido-L-arabinose from UDP to undecaprenyl phosphate. The modified arabinose is attached to lipid A and is required for resistance to polymyxin and cationic antimicrobial peptides. The chain is Undecaprenyl-phosphate 4-deoxy-4-formamido-L-arabinose transferase from Shigella sonnei (strain Ss046).